The primary structure comprises 495 residues: Flagellin (495 aa).

Belongs to the bacterial flagellin family.

It localises to the secreted. It is found in the bacterial flagellum. Functionally, flagellin is the subunit protein which polymerizes to form the filaments of bacterial flagella. The sequence is that of Flagellin (fliC) from Salmonella paratyphi A (strain ATCC 9150 / SARB42).